Here is a 228-residue protein sequence, read N- to C-terminus: UPF0758 protein NT01CX_1687 (228 aa).

In terms of domain architecture, MPN spans isoleucine 106–leucine 228. Zn(2+)-binding residues include histidine 177, histidine 179, and aspartate 190. The short motif at histidine 177 to aspartate 190 is the JAMM motif element.

Belongs to the UPF0758 family.

The protein is UPF0758 protein NT01CX_1687 of Clostridium novyi (strain NT).